The following is a 341-amino-acid chain: S-adenosylmethionine:tRNA ribosyltransferase-isomerase (341 aa).

Belongs to the QueA family. Monomer.

It localises to the cytoplasm. The enzyme catalyses 7-aminomethyl-7-carbaguanosine(34) in tRNA + S-adenosyl-L-methionine = epoxyqueuosine(34) in tRNA + adenine + L-methionine + 2 H(+). It participates in tRNA modification; tRNA-queuosine biosynthesis. In terms of biological role, transfers and isomerizes the ribose moiety from AdoMet to the 7-aminomethyl group of 7-deazaguanine (preQ1-tRNA) to give epoxyqueuosine (oQ-tRNA). The chain is S-adenosylmethionine:tRNA ribosyltransferase-isomerase from Herminiimonas arsenicoxydans.